The following is a 947-amino-acid chain: DNA mismatch repair protein MutS 2 (947 aa).

The disordered stretch occupies residues 623-643 (IPNDTHLGSGPVPASRDGSDD). 659-666 (GPNMSGKS) contributes to the ATP binding site. Residues 841 to 916 (AETADTGVEA…GAAAEDELPE (76 aa)) form a disordered region.

It belongs to the DNA mismatch repair MutS family.

This protein is involved in the repair of mismatches in DNA. It is possible that it carries out the mismatch recognition step. This protein has a weak ATPase activity. The sequence is that of DNA mismatch repair protein MutS 2 from Haloarcula marismortui (strain ATCC 43049 / DSM 3752 / JCM 8966 / VKM B-1809) (Halobacterium marismortui).